The sequence spans 527 residues: Probable bifunctional methylthioribulose-1-phosphate dehydratase/enolase-phosphatase E1 (527 aa).

Positions 1–244 (MAAAAAPAVA…AIKLHQLGLD (244 aa)) are methylthioribulose-1-phosphate dehydratase. Cysteine 116 lines the substrate pocket. Zn(2+) is bound by residues histidine 134 and histidine 136. Catalysis depends on glutamate 159, which acts as the Proton donor/acceptor; for methylthioribulose-1-phosphate dehydratase activity. A Zn(2+)-binding site is contributed by histidine 209. Residues 288–527 (IVLDIEGTTT…FKTINSLSEI (240 aa)) form an enolase-phosphatase E1 region. Positions 291 and 293 each coordinate Mg(2+). Residues 426–427 (SS) and lysine 460 contribute to the substrate site. Aspartate 486 serves as a coordination point for Mg(2+).

It in the N-terminal section; belongs to the aldolase class II family. MtnB subfamily. In the C-terminal section; belongs to the HAD-like hydrolase superfamily. MasA/MtnC family. Requires Zn(2+) as cofactor. Mg(2+) is required as a cofactor.

The catalysed reaction is 5-(methylsulfanyl)-D-ribulose 1-phosphate = 5-methylsulfanyl-2,3-dioxopentyl phosphate + H2O. It carries out the reaction 5-methylsulfanyl-2,3-dioxopentyl phosphate + H2O = 1,2-dihydroxy-5-(methylsulfanyl)pent-1-en-3-one + phosphate. It participates in amino-acid biosynthesis; L-methionine biosynthesis via salvage pathway; L-methionine from S-methyl-5-thio-alpha-D-ribose 1-phosphate: step 2/6. It functions in the pathway amino-acid biosynthesis; L-methionine biosynthesis via salvage pathway; L-methionine from S-methyl-5-thio-alpha-D-ribose 1-phosphate: step 3/6. Its pathway is amino-acid biosynthesis; L-methionine biosynthesis via salvage pathway; L-methionine from S-methyl-5-thio-alpha-D-ribose 1-phosphate: step 4/6. The protein is Probable bifunctional methylthioribulose-1-phosphate dehydratase/enolase-phosphatase E1 of Ricinus communis (Castor bean).